The primary structure comprises 278 residues: HAUS augmin-like complex subunit 1 (278 aa).

3 coiled-coil regions span residues 49–79 (RDVY…LMES), 124–177 (SDLF…KVDN), and 249–277 (SLAQ…DMME).

This sequence belongs to the HAUS1 family. As to quaternary structure, component of the HAUS augmin-like complex. The complex interacts with the gamma-tubulin ring complex and this interaction is required for spindle assembly. Associates with microtubules. The interaction with microtubules is strong during mitosis, while it is weak or absent during interphase. It is unclear whether this interaction is direct or indirect. Interacts with EML3 (phosphorylated at 'Thr-881'). Widely expressed. Expressed in pancreas, kidney, skeletal muscle, liver and heart. Weakly expressed in lung, brain and placenta.

It localises to the cytoplasm. The protein localises to the cytoskeleton. The protein resides in the microtubule organizing center. It is found in the centrosome. Its subcellular location is the spindle. It localises to the spindle pole. Functionally, contributes to mitotic spindle assembly, maintenance of centrosome integrity and completion of cytokinesis as part of the HAUS augmin-like complex. The polypeptide is HAUS augmin-like complex subunit 1 (HAUS1) (Homo sapiens (Human)).